The chain runs to 507 residues: Transposase for insertion sequences IS1326/IS1353 (507 aa).

An HTH IS21-type domain is found at 6 to 68 (ILSAIRRWHF…PFEPKLRQWL (63 aa)). Positions 19 to 40 (ASIREIARRSGLSRNTVRKYLQ) form a DNA-binding region, H-T-H motif. An Integrase catalytic domain is found at 122–302 (GCFIPLRFAC…TVQEAFADEQ (181 aa)).

The protein belongs to the transposase IS21/IS408/IS1162 family.

In terms of biological role, required for the transposition of the insertion element. The chain is Transposase for insertion sequences IS1326/IS1353 (istA) from Pseudomonas aeruginosa.